Reading from the N-terminus, the 222-residue chain is Adenylate kinase (222 aa).

S2 is a propeptide (removed in mature form). 2 positions are modified to N-acetylserine: S2 and S3. 16–21 (GAGKGT) lines the ATP pocket. Residues 36 to 65 (ATGDMLRSQIAKGTQLGLEAKKIMDQGGLV) are NMP. Residues T37, R42, 63–65 (GLV), 92–95 (GFPR), and Q99 contribute to the AMP site. The segment at 133-170 (GRLIHPASGRSYHKIFNPPKEDMKDDVTGEALVQRSDD) is LID. ATP-binding positions include R134 and 143–144 (SY). AMP-binding residues include R167 and R178. Q206 is a binding site for ATP.

Belongs to the adenylate kinase family. AK2 subfamily. In terms of assembly, monomer.

The protein localises to the cytoplasm. The protein resides in the cytosol. It localises to the mitochondrion intermembrane space. It carries out the reaction AMP + ATP = 2 ADP. Catalyzes the reversible transfer of the terminal phosphate group between ATP and AMP. Plays an important role in cellular energy homeostasis and in adenine nucleotide metabolism. Adenylate kinase activity is critical for regulation of the phosphate utilization and the AMP de novo biosynthesis pathways. This Saccharomyces cerevisiae (strain YJM789) (Baker's yeast) protein is Adenylate kinase.